Consider the following 374-residue polypeptide: Methionine import ATP-binding protein MetN 2 (374 aa).

Residues 1-22 (MSVATLQRKLPEAAPRRAGQTE) form a disordered region. The ABC transporter domain maps to 32–271 (VRFIGLGKTY…PQHEVSKTLL (240 aa)). Position 68–75 (68–75 (GRSGAGKS)) interacts with ATP.

The protein belongs to the ABC transporter superfamily. Methionine importer (TC 3.A.1.24) family. The complex is composed of two ATP-binding proteins (MetN), two transmembrane proteins (MetI) and a solute-binding protein (MetQ).

It localises to the cell inner membrane. The catalysed reaction is L-methionine(out) + ATP + H2O = L-methionine(in) + ADP + phosphate + H(+). The enzyme catalyses D-methionine(out) + ATP + H2O = D-methionine(in) + ADP + phosphate + H(+). Part of the ABC transporter complex MetNIQ involved in methionine import. Responsible for energy coupling to the transport system. In Pseudomonas fluorescens (strain ATCC BAA-477 / NRRL B-23932 / Pf-5), this protein is Methionine import ATP-binding protein MetN 2.